The chain runs to 827 residues: Periplasmic nitrate reductase (827 aa).

The segment at residues 1–32 (MELNRRDFMKANAAMAAAAAAGMTIPVKNVYA) is a signal peptide (tat-type signal). The 57-residue stretch at 37-93 (IRWDKAPCRFCGTGCSVLVGTKDGRVVATQGDPDAEVNRGLNCIKGYFLSKIMYGAD) folds into the 4Fe-4S Mo/W bis-MGD-type domain. Residues Cys-44, Cys-47, Cys-51, and Cys-79 each contribute to the [4Fe-4S] cluster site. Mo-bis(molybdopterin guanine dinucleotide)-binding positions include Lys-81, Gln-148, Asn-173, Cys-177, 210-217 (WGSNMAEM), 241-245 (STFEH), Met-371, Gln-375, Asn-481, 507-508 (SD), Lys-530, Asp-557, and 717-726 (TGRVLEHWHT). Phe-793 serves as a coordination point for substrate. The Mo-bis(molybdopterin guanine dinucleotide) site is built by Asn-801 and Lys-818.

This sequence belongs to the prokaryotic molybdopterin-containing oxidoreductase family. NasA/NapA/NarB subfamily. Component of the periplasmic nitrate reductase NapAB complex composed of NapA and NapB. Requires [4Fe-4S] cluster as cofactor. Mo-bis(molybdopterin guanine dinucleotide) is required as a cofactor. Post-translationally, predicted to be exported by the Tat system. The position of the signal peptide cleavage has not been experimentally proven.

Its subcellular location is the periplasm. It carries out the reaction 2 Fe(II)-[cytochrome] + nitrate + 2 H(+) = 2 Fe(III)-[cytochrome] + nitrite + H2O. Its function is as follows. Catalytic subunit of the periplasmic nitrate reductase complex NapAB. Receives electrons from NapB and catalyzes the reduction of nitrate to nitrite. In Actinobacillus pleuropneumoniae serotype 7 (strain AP76), this protein is Periplasmic nitrate reductase.